Consider the following 265-residue polypeptide: Lysosomal membrane ascorbate-dependent ferrireductase CYB561A3 (265 aa).

Over 1–2 the chain is Cytoplasmic; sequence MA. The helical transmembrane segment at 3 to 23 threads the bilayer; it reads VGWFYLSVLALCSLGSMCILF. Residues 12 to 219 form the Cytochrome b561 domain; the sequence is ALCSLGSMCI…FGLLVLYILL (208 aa). At 24 to 45 the chain is on the lumenal side; sequence TIYWMRYWHGGFAWDGSMLMFN. Residues 46-66 traverse the membrane as a helical segment; the sequence is WHPVLMVTGMVVLYSAASLVY. Residues histidine 47 and arginine 67 each coordinate heme b. Topologically, residues 67 to 83 are cytoplasmic; it reads RLPQSWVGPRLPWKSGH. Positions 76 and 80 each coordinate L-ascorbate. Residue histidine 83 participates in heme b binding. A helical membrane pass occupies residues 84–104; that stretch reads AAMHLLAFLLTVLGLHAVFEF. The Lumenal segment spans residues 105-119; sequence HNHAKIPHLYSLHSW. Heme b contacts are provided by residues 112-115 and histidine 117; that span reads HLYS. The helical transmembrane segment at 120 to 140 threads the bilayer; that stretch reads LGITTVFLFACQWFLGFSVFL. At 141–154 the chain is on the cytoplasmic side; it reads LPWASMWLRSLLKP. Arginine 149 serves as a coordination point for L-ascorbate. A helical membrane pass occupies residues 155 to 175; the sequence is IHVFFGASILSLAIASVVSGI. Residues histidine 156 and glutamate 177 each contribute to the heme b site. At 176–197 the chain is on the lumenal side; it reads NEKLFFSLKNGTKTYSNLPSEA. N-linked (GlcNAc...) asparagine glycosylation is present at asparagine 185. A helical membrane pass occupies residues 198–218; that stretch reads VFANCAGMLVVVFGLLVLYIL. Residues 219 to 265 are Cytoplasmic-facing; that stretch reads LASSWKRPEPGMQAEREPTRTRGRAGTPEVMLEGERGLAEPLLQKRS. Residue lysine 224 coordinates heme b. The span at 228-238 shows a compositional bias: basic and acidic residues; that stretch reads PGMQAEREPTR. The disordered stretch occupies residues 228–265; the sequence is PGMQAEREPTRTRGRAGTPEVMLEGERGLAEPLLQKRS.

In terms of assembly, homodimer. It depends on heme b as a cofactor. N-glycosylated.

The protein localises to the late endosome membrane. Its subcellular location is the lysosome membrane. It catalyses the reaction Fe(3+)(out) + L-ascorbate(in) = monodehydro-L-ascorbate radical(in) + Fe(2+)(out) + H(+). Transmembrane reductase that uses ascorbate as an electron donor in the cytoplasm and transfers electrons across membranes to reduce iron cations Fe(3+) into Fe(2+) in the lumen of the late endosome and lysosome. Reduced iron can then be extruded from the late endosome and lysosome to the cytoplasm by divalent metal-specific transporters. It is therefore most probably involved in endosomal and lysosomal cellular iron homeostasis. This Bos taurus (Bovine) protein is Lysosomal membrane ascorbate-dependent ferrireductase CYB561A3.